The following is a 123-amino-acid chain: Ribosome-binding factor A (123 aa).

It belongs to the RbfA family. As to quaternary structure, monomer. Binds 30S ribosomal subunits, but not 50S ribosomal subunits or 70S ribosomes.

The protein localises to the cytoplasm. In terms of biological role, one of several proteins that assist in the late maturation steps of the functional core of the 30S ribosomal subunit. Associates with free 30S ribosomal subunits (but not with 30S subunits that are part of 70S ribosomes or polysomes). Required for efficient processing of 16S rRNA. May interact with the 5'-terminal helix region of 16S rRNA. In Variovorax paradoxus (strain S110), this protein is Ribosome-binding factor A.